Here is an 86-residue protein sequence, read N- to C-terminus: Teretoxin Tsu6.16 (86 aa).

The first 21 residues, 1–21, serve as a signal peptide directing secretion; the sequence is MATSGRLLCVCLVMGLVFESL. A propeptide spanning residues 22–46 is cleaved from the precursor; that stretch reads GYLTGREKRPAENLEASVQRRWYLN.

The protein belongs to the teretoxin M (TM) superfamily. Post-translationally, contains 3 disulfide bonds. In terms of tissue distribution, expressed by the venom duct.

Its subcellular location is the secreted. The chain is Teretoxin Tsu6.16 from Terebra subulata (Chocolate spotted auger).